We begin with the raw amino-acid sequence, 284 residues long: Bifunctional protein FolD 2 (284 aa).

Residues 166-168 (GAS) and I232 each bind NADP(+).

The protein belongs to the tetrahydrofolate dehydrogenase/cyclohydrolase family. As to quaternary structure, homodimer.

It carries out the reaction (6R)-5,10-methylene-5,6,7,8-tetrahydrofolate + NADP(+) = (6R)-5,10-methenyltetrahydrofolate + NADPH. The catalysed reaction is (6R)-5,10-methenyltetrahydrofolate + H2O = (6R)-10-formyltetrahydrofolate + H(+). It participates in one-carbon metabolism; tetrahydrofolate interconversion. Functionally, catalyzes the oxidation of 5,10-methylenetetrahydrofolate to 5,10-methenyltetrahydrofolate and then the hydrolysis of 5,10-methenyltetrahydrofolate to 10-formyltetrahydrofolate. The protein is Bifunctional protein FolD 2 of Pseudomonas putida (strain ATCC 47054 / DSM 6125 / CFBP 8728 / NCIMB 11950 / KT2440).